A 269-amino-acid chain; its full sequence is Energy-coupling factor transporter transmembrane protein EcfT (269 aa).

Helical transmembrane passes span 45-65, 75-95, 110-130, 153-173, 202-222, and 244-264; these read RFFL…RVSL, VLWL…GEAI, MAAL…LLTL, FPAH…PTLL, FVPV…DLAL, and CLED…LLFL.

It belongs to the energy-coupling factor EcfT family. As to quaternary structure, forms a stable energy-coupling factor (ECF) transporter complex composed of 2 membrane-embedded substrate-binding proteins (S component), 2 ATP-binding proteins (A component) and 2 transmembrane proteins (T component). May be able to interact with more than 1 S component at a time.

Its subcellular location is the cell membrane. In terms of biological role, transmembrane (T) component of an energy-coupling factor (ECF) ABC-transporter complex. Unlike classic ABC transporters this ECF transporter provides the energy necessary to transport a number of different substrates. The chain is Energy-coupling factor transporter transmembrane protein EcfT from Thermanaerovibrio acidaminovorans (strain ATCC 49978 / DSM 6589 / Su883) (Selenomonas acidaminovorans).